Here is a 574-residue protein sequence, read N- to C-terminus: ATP-dependent RNA helicase RhlB (574 aa).

The Q motif motif lies at 9-37; the sequence is VTFSSFDLHPALVAGLESAGFTRCTPIQA. The Helicase ATP-binding domain occupies 40-220; sequence LPVALPGGDV…YEHMNEPEKL (181 aa). 53–60 contributes to the ATP binding site; it reads AQTGTGKT. The DEAD box signature appears at 166–169; the sequence is DEAD. The Helicase C-terminal domain occupies 231 to 393; the sequence is RVRQRIYFPS…PVTSELLTPL (163 aa). The span at 423 to 432 shows a compositional bias: basic and acidic residues; sequence EQRAAEEQRR. The interval 423-574 is disordered; that stretch reads EQRAAEEQRR…RRLRSLVSGN (152 aa). The span at 435–449 shows a compositional bias: gly residues; sequence GRSGPGGGSRSGSGG. Over residues 477-495 the composition is skewed to low complexity; sequence AAAAQTEKPVVAAAAAQAP. Over residues 506 to 515 the composition is skewed to basic residues; the sequence is PRKRRRRRNG. Low complexity-rich tracts occupy residues 523 to 535 and 553 to 562; these read PAVA…APAA and SSGSPSLLGR.

The protein belongs to the DEAD box helicase family. RhlB subfamily. As to quaternary structure, component of the RNA degradosome, which is a multiprotein complex involved in RNA processing and mRNA degradation.

It localises to the cytoplasm. It catalyses the reaction ATP + H2O = ADP + phosphate + H(+). Its function is as follows. DEAD-box RNA helicase involved in RNA degradation. Has RNA-dependent ATPase activity and unwinds double-stranded RNA. The chain is ATP-dependent RNA helicase RhlB from Xanthomonas oryzae pv. oryzae (strain KACC10331 / KXO85).